We begin with the raw amino-acid sequence, 87 residues long: Citrate lyase acyl carrier protein (87 aa).

S14 is modified (O-(phosphoribosyl dephospho-coenzyme A)serine).

This sequence belongs to the CitD family. In terms of assembly, oligomer with a subunit composition of (alpha,beta,gamma)6.

Its subcellular location is the cytoplasm. Its function is as follows. Covalent carrier of the coenzyme of citrate lyase. This chain is Citrate lyase acyl carrier protein, found in Treponema denticola (strain ATCC 35405 / DSM 14222 / CIP 103919 / JCM 8153 / KCTC 15104).